A 162-amino-acid polypeptide reads, in one-letter code: Phosphopantetheine adenylyltransferase (162 aa).

A substrate-binding site is contributed by S9. ATP-binding positions include 9–10 (SF) and H17. The substrate site is built by K41, L73, and K87. ATP-binding positions include 88-90 (GLR), E98, and 122-128 (YSFLSSS).

This sequence belongs to the bacterial CoaD family. As to quaternary structure, homohexamer. Requires Mg(2+) as cofactor.

The protein localises to the cytoplasm. It carries out the reaction (R)-4'-phosphopantetheine + ATP + H(+) = 3'-dephospho-CoA + diphosphate. It participates in cofactor biosynthesis; coenzyme A biosynthesis; CoA from (R)-pantothenate: step 4/5. In terms of biological role, reversibly transfers an adenylyl group from ATP to 4'-phosphopantetheine, yielding dephospho-CoA (dPCoA) and pyrophosphate. The protein is Phosphopantetheine adenylyltransferase of Salinispora tropica (strain ATCC BAA-916 / DSM 44818 / JCM 13857 / NBRC 105044 / CNB-440).